The following is a 790-amino-acid chain: Protein SEY1 (790 aa).

The Cytoplasmic segment spans residues Met-1–Gln-692. The GB1/RHD3-type G domain maps to Gly-55 to Tyr-284. Residue Gly-65–Ser-72 coordinates GTP. A helical transmembrane segment spans residues Ile-693 to Ile-713. The Lumenal portion of the chain corresponds to Arg-714–Pro-716. A helical membrane pass occupies residues Leu-717 to Leu-737. Over Leu-738–Met-790 the chain is Cytoplasmic.

This sequence belongs to the TRAFAC class dynamin-like GTPase superfamily. GB1/RHD3 GTPase family. RHD3 subfamily.

Its subcellular location is the endoplasmic reticulum membrane. In terms of biological role, cooperates with the reticulon proteins and tubule-shaping DP1 family proteins to generate and maintain the structure of the tubular endoplasmic reticulum network. Has GTPase activity, which is required for its function in ER organization. Required for virulence and resistance to cycloheximide. The protein is Protein SEY1 of Candida albicans (strain SC5314 / ATCC MYA-2876) (Yeast).